Reading from the N-terminus, the 209-residue chain is Ribosome maturation factor RimP (209 aa).

Belongs to the RimP family.

The protein resides in the cytoplasm. Its function is as follows. Required for maturation of 30S ribosomal subunits. In Bartonella bacilliformis (strain ATCC 35685 / KC583 / Herrer 020/F12,63), this protein is Ribosome maturation factor RimP.